We begin with the raw amino-acid sequence, 283 residues long: Probable replication-associated protein repA1 (283 aa).

It belongs to the IncFII RepA family.

Functionally, this protein is essential for plasmid replication; it is involved in copy control functions. The polypeptide is Probable replication-associated protein repA1 (repA1) (Buchnera aphidicola subsp. Acyrthosiphon pisum (strain APS) (Acyrthosiphon pisum symbiotic bacterium)).